The primary structure comprises 393 residues: Glutamyl-tRNA reductase (393 aa).

Residues threonine 47–arginine 50, serine 98, glutamate 103–aspartate 105, and glutamine 109 each bind substrate. Cysteine 48 (nucleophile) is an active-site residue. An NADP(+)-binding site is contributed by glycine 177–glycine 182.

Belongs to the glutamyl-tRNA reductase family. As to quaternary structure, homodimer.

The catalysed reaction is (S)-4-amino-5-oxopentanoate + tRNA(Glu) + NADP(+) = L-glutamyl-tRNA(Glu) + NADPH + H(+). The protein operates within porphyrin-containing compound metabolism; protoporphyrin-IX biosynthesis; 5-aminolevulinate from L-glutamyl-tRNA(Glu): step 1/2. Its function is as follows. Catalyzes the NADPH-dependent reduction of glutamyl-tRNA(Glu) to glutamate 1-semialdehyde (GSA). The chain is Glutamyl-tRNA reductase from Pyrobaculum islandicum (strain DSM 4184 / JCM 9189 / GEO3).